Here is a 162-residue protein sequence, read N- to C-terminus: Shikimate kinase (162 aa).

11 to 16 is an ATP binding site; the sequence is GSGKSS. A Mg(2+)-binding site is contributed by S15. Substrate contacts are provided by D33, R57, and G80. R116 lines the ATP pocket. R132 contributes to the substrate binding site.

This sequence belongs to the shikimate kinase family. In terms of assembly, monomer. Mg(2+) serves as cofactor.

The protein resides in the cytoplasm. The catalysed reaction is shikimate + ATP = 3-phosphoshikimate + ADP + H(+). The protein operates within metabolic intermediate biosynthesis; chorismate biosynthesis; chorismate from D-erythrose 4-phosphate and phosphoenolpyruvate: step 5/7. Its function is as follows. Catalyzes the specific phosphorylation of the 3-hydroxyl group of shikimic acid using ATP as a cosubstrate. The chain is Shikimate kinase from Helicobacter pylori (strain J99 / ATCC 700824) (Campylobacter pylori J99).